The chain runs to 466 residues: Asparagine--tRNA ligase (466 aa).

The protein belongs to the class-II aminoacyl-tRNA synthetase family. As to quaternary structure, homodimer.

It is found in the cytoplasm. The catalysed reaction is tRNA(Asn) + L-asparagine + ATP = L-asparaginyl-tRNA(Asn) + AMP + diphosphate + H(+). The chain is Asparagine--tRNA ligase from Shigella dysenteriae serotype 1 (strain Sd197).